Here is a 336-residue protein sequence, read N- to C-terminus: Protein REVEILLE 7-like (336 aa).

An HTH myb-type domain is found at 60 to 114 (TVTKQREKWSEEEHDRFLEAIKLYGRGWRQIQEHIGTKTAVQIRSHAQKFFSKMA). The segment at residues 87–110 (WRQIQEHIGTKTAVQIRSHAQKFF) is a DNA-binding region (H-T-H motif). The interval 114 to 197 (AQEADSRSEG…KQPFKDDSDI (84 aa)) is disordered. Residues 134-144 (RPKRKPAHPYP) show a composition bias toward basic residues. The span at 145-158 (RKSPVPYTQSPPPN) shows a compositional bias: pro residues. Residues 167–189 (KSPTSVLSSFGSEDQNNYTTSKQ) show a composition bias toward polar residues.

It is found in the nucleus. In terms of biological role, probable transcription factor. In Arabidopsis thaliana (Mouse-ear cress), this protein is Protein REVEILLE 7-like (RVE7L).